Reading from the N-terminus, the 217-residue chain is Thiopurine S-methyltransferase (217 aa).

Residues Trp11, Leu46, Glu67, and Arg122 each contribute to the S-adenosyl-L-methionine site.

This sequence belongs to the class I-like SAM-binding methyltransferase superfamily. TPMT family.

Its subcellular location is the cytoplasm. It carries out the reaction S-adenosyl-L-methionine + a thiopurine = S-adenosyl-L-homocysteine + a thiopurine S-methylether.. The sequence is that of Thiopurine S-methyltransferase from Vibrio atlanticus (strain LGP32) (Vibrio splendidus (strain Mel32)).